Reading from the N-terminus, the 239-residue chain is Ribonuclease PH (239 aa).

Residues Arg86 and 124–126 each bind phosphate; that span reads GTR.

This sequence belongs to the RNase PH family. In terms of assembly, homohexameric ring arranged as a trimer of dimers.

The enzyme catalyses tRNA(n+1) + phosphate = tRNA(n) + a ribonucleoside 5'-diphosphate. Functionally, phosphorolytic 3'-5' exoribonuclease that plays an important role in tRNA 3'-end maturation. Removes nucleotide residues following the 3'-CCA terminus of tRNAs; can also add nucleotides to the ends of RNA molecules by using nucleoside diphosphates as substrates, but this may not be physiologically important. Probably plays a role in initiation of 16S rRNA degradation (leading to ribosome degradation) during starvation. The chain is Ribonuclease PH from Psychromonas ingrahamii (strain DSM 17664 / CCUG 51855 / 37).